The sequence spans 286 residues: Thymidylate synthase (286 aa).

Residue Arg-21 participates in dUMP binding. A (6R)-5,10-methylene-5,6,7,8-tetrahydrofolate-binding site is contributed by Asn-51. 150–151 (RR) lines the dUMP pocket. The active-site Nucleophile is the Cys-170. DUMP-binding positions include 190–193 (RSAD), Asn-201, and 231–233 (HIY). Asp-193 is a binding site for (6R)-5,10-methylene-5,6,7,8-tetrahydrofolate. Residue Ala-285 participates in (6R)-5,10-methylene-5,6,7,8-tetrahydrofolate binding.

The protein belongs to the thymidylate synthase family. Bacterial-type ThyA subfamily. In terms of assembly, homodimer.

It localises to the cytoplasm. The catalysed reaction is dUMP + (6R)-5,10-methylene-5,6,7,8-tetrahydrofolate = 7,8-dihydrofolate + dTMP. It participates in pyrimidine metabolism; dTTP biosynthesis. Its function is as follows. Catalyzes the reductive methylation of 2'-deoxyuridine-5'-monophosphate (dUMP) to 2'-deoxythymidine-5'-monophosphate (dTMP) while utilizing 5,10-methylenetetrahydrofolate (mTHF) as the methyl donor and reductant in the reaction, yielding dihydrofolate (DHF) as a by-product. This enzymatic reaction provides an intracellular de novo source of dTMP, an essential precursor for DNA biosynthesis. In Mycoplasmopsis pulmonis (strain UAB CTIP) (Mycoplasma pulmonis), this protein is Thymidylate synthase.